Consider the following 109-residue polypeptide: Small ribosomal subunit protein uS10 (109 aa).

It belongs to the universal ribosomal protein uS10 family. As to quaternary structure, part of the 30S ribosomal subunit.

Functionally, involved in the binding of tRNA to the ribosomes. This Nanoarchaeum equitans (strain Kin4-M) protein is Small ribosomal subunit protein uS10.